Consider the following 349-residue polypeptide: KH domain-containing, RNA-binding, signal transduction-associated protein 2 (349 aa).

One can recognise a KH domain in the interval 65–135; it reads LIPVKQYPKF…HLSDELHVLI (71 aa). Disordered stretches follow at residues 181-263 and 321-349; these read SEES…PPPA and EWATTRSSLKAPPPRSARGGYREHPYGRY. A compositionally biased stretch (low complexity) spans 218–231; the sequence is RGVLTPRGTTVTRG. 2 positions are modified to omega-N-methylarginine: R230 and R240. A compositionally biased stretch (basic and acidic residues) spans 340 to 349; the sequence is GYREHPYGRY.

The protein belongs to the KHDRBS family. As to quaternary structure, self-associates to form homooligomers. Interacts with KHDRBS1/SAM68; heterooligomer formation of KHDRBS family proteins may modulate RNA substrate specificity. Interacts with RBMX, SAFB, SFRS9 and YTHDC1. Interacts with FYN and PLCG1 (via SH3 domain). Interacts (phosphorylated) with FYN, GRB2, PLCG1 and RASA1 (via SH2 domain). Post-translationally, methylated. In terms of processing, tyrosine phosphorylated by FYN, PTK6 and SRC. Tyrosine phosphorylated by SRC during mitosis. As to expression, expressed in heart, skin, brain, colon, spleen, kidney, cervix and testis. In adult cerebellum expressed predominantly in Purkinje cells and in the hippocampus is abundantly expressed in glutamatergic dentate granule cells and in specific inhibitory Schaffer collateral-associated and path-associated interneurons; expression is restricted to neuronal subpopulations largely non-overlapping with expression of KHDRBS3/SLM-2 (at protein level).

It localises to the nucleus. Functionally, RNA-binding protein that plays a role in the regulation of alternative splicing and influences mRNA splice site selection and exon inclusion. Binds both poly(A) and poly(U) homopolymers. Phosphorylation by PTK6 inhibits its RNA-binding ability. Induces an increased concentration-dependent incorporation of exon in CD44 pre-mRNA by direct binding to purine-rich exonic enhancer. Can regulate alternative splicing of neurexins NRXN1-3 in the laminin G-like domain 6 containing the evolutionary conserved neurexin alternative spliced segment 4 (AS4) involved in neurexin selective targeting to postsynaptic partners. Regulates cell-type specific alternative splicing of NRXN1 at AS4 and acts synergystically with SAM68 in exon skipping. In contrast acts antagonistically with SAM68 in NRXN3 exon skipping at AS4. Its phosphorylation by FYN inhibits its ability to regulate splice site selection. May function as an adapter protein for Src kinases during mitosis. This Mus musculus (Mouse) protein is KH domain-containing, RNA-binding, signal transduction-associated protein 2 (Khdrbs2).